The chain runs to 178 residues: UPF0215 protein STK_03040 (178 aa).

It belongs to the UPF0215 family.

In Sulfurisphaera tokodaii (strain DSM 16993 / JCM 10545 / NBRC 100140 / 7) (Sulfolobus tokodaii), this protein is UPF0215 protein STK_03040.